A 93-amino-acid polypeptide reads, in one-letter code: FMRFamide-like neuropeptides 22 (93 aa).

Residues 1–19 form the signal peptide; that stretch reads MNRSMIALCVVLMVSLVSA. Residues 20-46 constitute a propeptide that is removed on maturation; sequence QVFDLDGQQLAGLEQNDARLMEQQVKR. A phenylalanine amide mark is found at Phe-55, Phe-67, and Phe-79. Positions 83 to 93 are excised as a propeptide; sequence SGAEAVSEQDY.

Belongs to the FARP (FMRFamide related peptide) family.

It is found in the secreted. FMRFamides and FMRFamide-like peptides are neuropeptides. Its function is as follows. SPSAKWMRF-amide: Acts as a ligand for the npr-22 receptor in vitro. The polypeptide is FMRFamide-like neuropeptides 22 (Caenorhabditis elegans).